Here is a 147-residue protein sequence, read N- to C-terminus: Cytochrome c-type biogenesis protein CcmE (147 aa).

Residues 1 to 9 (MKSLKKQRR) are Cytoplasmic-facing. Residues 10-30 (IQIIALATVALVGSTALIGYA) traverse the membrane as a helical; Signal-anchor for type II membrane protein segment. The Periplasmic portion of the chain corresponds to 31 to 147 (MRDGINYFRS…EQGVYREGDS (117 aa)). The heme site is built by His-123 and Tyr-127.

It belongs to the CcmE/CycJ family.

It is found in the cell inner membrane. Its function is as follows. Heme chaperone required for the biogenesis of c-type cytochromes. Transiently binds heme delivered by CcmC and transfers the heme to apo-cytochromes in a process facilitated by CcmF and CcmH. This is Cytochrome c-type biogenesis protein CcmE from Ruegeria sp. (strain TM1040) (Silicibacter sp.).